We begin with the raw amino-acid sequence, 544 residues long: Chaperonin GroEL (544 aa).

ATP contacts are provided by residues 30-33 (TLGP), lysine 51, 87-91 (DGTTT), glycine 415, 479-481 (NAA), and aspartate 495.

Belongs to the chaperonin (HSP60) family. In terms of assembly, forms a cylinder of 14 subunits composed of two heptameric rings stacked back-to-back. Interacts with the co-chaperonin GroES.

It localises to the cytoplasm. The catalysed reaction is ATP + H2O + a folded polypeptide = ADP + phosphate + an unfolded polypeptide.. Functionally, together with its co-chaperonin GroES, plays an essential role in assisting protein folding. The GroEL-GroES system forms a nano-cage that allows encapsulation of the non-native substrate proteins and provides a physical environment optimized to promote and accelerate protein folding. The chain is Chaperonin GroEL from Francisella tularensis subsp. novicida (strain U112).